A 141-amino-acid chain; its full sequence is MLSPRRTKFRKQQRGRMEGLAHRGSTLNFGDFALQAQEPAWITSRQIEASRRAMTRYIRRGGQIWIRIFPDKPVTMRPAETRMGSGKGNPEFWVAVVKPGRILFEIAGVSEEVAREAMRLAAYKLPIKTKFIVRPQVQEQE.

It belongs to the universal ribosomal protein uL16 family. In terms of assembly, part of the 50S ribosomal subunit.

Its function is as follows. Binds 23S rRNA and is also seen to make contacts with the A and possibly P site tRNAs. In Microchaete diplosiphon (Fremyella diplosiphon), this protein is Large ribosomal subunit protein uL16.